A 323-amino-acid chain; its full sequence is Solute carrier family 35 member B1 (323 aa).

8 helical membrane passes run leucine 15–isoleucine 35, phenylalanine 51–isoleucine 71, tryptophan 85–leucine 105, tyrosine 136–tyrosine 156, threonine 169–valine 189, methionine 205–glycine 225, leucine 253–isoleucine 273, and valine 286–leucine 306. Residues lysine 319 to histidine 323 carry the Di-lysine motif motif.

The protein belongs to the nucleotide-sugar transporter family. SLC35B subfamily.

The protein resides in the endoplasmic reticulum membrane. Functionally, probable sugar transporter. The sequence is that of Solute carrier family 35 member B1 (slc35b1) from Xenopus tropicalis (Western clawed frog).